Here is a 92-residue protein sequence, read N- to C-terminus: Small ribosomal subunit protein bS18 (92 aa).

Residues 1-27 (MTQQSNSADRKPRGKGPKRPRKPKVDP) are disordered. A compositionally biased stretch (basic residues) spans 12 to 22 (PRGKGPKRPRK).

Belongs to the bacterial ribosomal protein bS18 family. In terms of assembly, part of the 30S ribosomal subunit. Forms a tight heterodimer with protein bS6.

In terms of biological role, binds as a heterodimer with protein bS6 to the central domain of the 16S rRNA, where it helps stabilize the platform of the 30S subunit. The polypeptide is Small ribosomal subunit protein bS18 (Deinococcus deserti (strain DSM 17065 / CIP 109153 / LMG 22923 / VCD115)).